We begin with the raw amino-acid sequence, 425 residues long: Glutamyl-tRNA(Gln) amidotransferase subunit D (425 aa).

Residues 53–84 form a disordered region; the sequence is ENNGEAANGGNGGKNGQKEPEPAKEKVSKPGL. The span at 68 to 80 shows a compositional bias: basic and acidic residues; that stretch reads GQKEPEPAKEKVS. One can recognise an Asparaginase/glutaminase domain in the interval 85-414; the sequence is PKVSILSTGG…EKAVSMLGEN (330 aa). Catalysis depends on residues T95, T171, D172, and K248.

The protein belongs to the asparaginase 1 family. GatD subfamily. As to quaternary structure, heterodimer of GatD and GatE.

The enzyme catalyses L-glutamyl-tRNA(Gln) + L-glutamine + ATP + H2O = L-glutaminyl-tRNA(Gln) + L-glutamate + ADP + phosphate + H(+). Functionally, allows the formation of correctly charged Gln-tRNA(Gln) through the transamidation of misacylated Glu-tRNA(Gln) in organisms which lack glutaminyl-tRNA synthetase. The reaction takes place in the presence of glutamine and ATP through an activated gamma-phospho-Glu-tRNA(Gln). The GatDE system is specific for glutamate and does not act on aspartate. The protein is Glutamyl-tRNA(Gln) amidotransferase subunit D of Methanosarcina mazei (strain ATCC BAA-159 / DSM 3647 / Goe1 / Go1 / JCM 11833 / OCM 88) (Methanosarcina frisia).